Reading from the N-terminus, the 384-residue chain is MPNASRVVIVAGEESGDHHAAELVKQLKAVYPNLKISGIGGKHLRAAGVHLISDLTRYAVTGLTEIIPFLKIFHKAFQDIKQHLSTQKPDLLILVDYPAFNLRLAKYAKKKLGLKIIYYISPQIWAWKGKRIHLIKDSIDKMAVIFPFEKTIYENAGVPVSFVGHPLVKKIASAKDKHSSRTFLGLPLDEPIIALLPGSRHSEIERHIPILVNTAKLLTLDNPKLRFVVPIAGTINPDKVKAYFSNQNLTVTFIQGQAIECMSAADFVIVASGTASLECALLEKPMCIIYKSSFLTYVAAMYFIKVKFLGLCNLLANKMMVPEFLQYDCNEIELSRYISNFHSDPNQPKSMINQLAKLKESLSSSQADCSLFDLVVAELPEKNA.

The protein belongs to the LpxB family.

The enzyme catalyses a lipid X + a UDP-2-N,3-O-bis[(3R)-3-hydroxyacyl]-alpha-D-glucosamine = a lipid A disaccharide + UDP + H(+). Its pathway is bacterial outer membrane biogenesis; LPS lipid A biosynthesis. In terms of biological role, condensation of UDP-2,3-diacylglucosamine and 2,3-diacylglucosamine-1-phosphate to form lipid A disaccharide, a precursor of lipid A, a phosphorylated glycolipid that anchors the lipopolysaccharide to the outer membrane of the cell. This is Lipid-A-disaccharide synthase 1 from Legionella pneumophila (strain Paris).